Consider the following 335-residue polypeptide: Rho guanine nucleotide exchange factor 39 (335 aa).

The region spanning 22–197 is the DH domain; that stretch reads KRACTARELL…SETAQRVHTI (176 aa). In terms of domain architecture, PH spans 227 to 331; the sequence is WFLRQGWLLV…WYHSLTWAIS (105 aa).

As to expression, strongly expressed in hepatocellular carcinoma (HCC) compared with their non-cancerous counterparts.

Its subcellular location is the cell membrane. Functionally, promotes cell proliferation. This is Rho guanine nucleotide exchange factor 39 (ARHGEF39) from Homo sapiens (Human).